The sequence spans 110 residues: MFEKTNRMNLLFDFYQELLTTKQKAYVSFYYLDDYSLGEIAEEFEVSRQAIYDNIKRTEESLEKYEEKLGMLKKYQQREKLFSELEAQLTKKNFLDEQVKDTLEQLKNID.

Belongs to the UPF0122 family.

In terms of biological role, might take part in the signal recognition particle (SRP) pathway. This is inferred from the conservation of its genetic proximity to ftsY/ffh. May be a regulatory protein. In Listeria welshimeri serovar 6b (strain ATCC 35897 / DSM 20650 / CCUG 15529 / CIP 8149 / NCTC 11857 / SLCC 5334 / V8), this protein is UPF0122 protein lwe1821.